We begin with the raw amino-acid sequence, 191 residues long: Protein HP-20 homolog (191 aa).

Positions 1–16 (MADLRILVSIILMTNA) are cleaved as a signal peptide. One can recognise a Collagen-like domain in the interval 22–58 (GCTGPPGPPGHPGPPGIRGPPGIRGIPGLPGPPGTPG). The disordered stretch occupies residues 22–61 (GCTGPPGPPGHPGPPGIRGPPGIRGIPGLPGPPGTPGPSV). Positions 26–39 (PPGPPGHPGPPGIR) are enriched in pro residues. The C1q domain maps to 64–191 (PCHRQSAFTV…VTIYFSGFLT (128 aa)).

The protein localises to the secreted. The chain is Protein HP-20 homolog from Bos taurus (Bovine).